We begin with the raw amino-acid sequence, 699 residues long: 4-alpha-glucanotransferase (699 aa).

The protein belongs to the disproportionating enzyme family.

The protein resides in the cytoplasm. It carries out the reaction Transfers a segment of a (1-&gt;4)-alpha-D-glucan to a new position in an acceptor, which may be glucose or a (1-&gt;4)-alpha-D-glucan.. The polypeptide is 4-alpha-glucanotransferase (malQ) (Haemophilus influenzae (strain ATCC 51907 / DSM 11121 / KW20 / Rd)).